The chain runs to 154 residues: MQGHPEVIDYLNTLLTGELAARDQYFIHSRMYEDWGFSKLYERLNHEMEEETQHADALLRRILLLEGTPRMRPDDIHPGTTVPEMLEADLKLERHVRAALAKGIALCEQHKDFVSRDILKAQLADTEEDHAYWLEQQLGLIARMGLENYLQSQI.

One can recognise a Ferritin-like diiron domain in the interval 1–145 (MQGHPEVIDY…QQLGLIARMG (145 aa)). Residues Glu-18, His-46, Glu-47, Glu-50, Glu-51, His-54, Glu-93, Asp-129, and His-130 each contribute to the Fe(3+) site.

This sequence belongs to the bacterioferritin family. The bacterioferritin (BFR) complex is formed of 24 subunits (FtnA and BfrB) arranged as 12 homodimers. The holocomplex contains about 8.7% Fe and 8.0% phosphate. In vivo purifies with BfrB in varying ratios, depending on the O(2) content; as O(2) decreases FtnA content rises. Pure FtnA BFR complexes are not isolated in situ, although in a bfrB deletion some iron will accumulate in FtnA ferritin complexes. Upon crystallization forms homooligomers of 24 subunits, the BFR complex, arranged as 12 dimers, that are packed together to form an approximately spherical molecule with a central cavity, in which large amounts of iron can be deposited. The BFR shell has three- and four-fold pores; Fe(2+) may move in and out of the shell via the four-fold pores. Does not interact with Bfd.

It localises to the cytoplasm. The catalysed reaction is 4 Fe(2+) + O2 + 4 H(+) = 4 Fe(3+) + 2 H2O. It carries out the reaction Fe(2+)(in) = Fe(2+)(out). Its function is as follows. Plays a role in catalase A (katA) expression; activity is required for optimal KatA activity and resistance to H(2)O(2). Iron-storage protein that is part of the heterooligomeric bacterioferritin (BFR) complex. The ferroxidase center binds Fe(2+), oxidizes it using dioxygen to Fe(3+), and participates in subsequent Fe(3+) oxide mineral core formation within the central cavity of the BFR protein shell. Can store up to 520 iron atoms per ferritin protein molecule. Iron release requires only the input of electrons from ferredoxin NADP reductase (FPR), does not require Bfd. Does not bind heme. The polypeptide is Bacterial ferritin (Pseudomonas aeruginosa (strain ATCC 15692 / DSM 22644 / CIP 104116 / JCM 14847 / LMG 12228 / 1C / PRS 101 / PAO1)).